The chain runs to 81 residues: ATP synthase subunit c (81 aa).

A run of 2 helical transmembrane segments spans residues 5-25 (IAAG…IGAG) and 57-77 (VGLV…FVFA).

This sequence belongs to the ATPase C chain family. As to quaternary structure, F-type ATPases have 2 components, F(1) - the catalytic core - and F(0) - the membrane proton channel. F(1) has five subunits: alpha(3), beta(3), gamma(1), delta(1), epsilon(1). F(0) has three main subunits: a(1), b(2) and c(10-14). The alpha and beta chains form an alternating ring which encloses part of the gamma chain. F(1) is attached to F(0) by a central stalk formed by the gamma and epsilon chains, while a peripheral stalk is formed by the delta and b chains.

The protein resides in the cell membrane. F(1)F(0) ATP synthase produces ATP from ADP in the presence of a proton or sodium gradient. F-type ATPases consist of two structural domains, F(1) containing the extramembraneous catalytic core and F(0) containing the membrane proton channel, linked together by a central stalk and a peripheral stalk. During catalysis, ATP synthesis in the catalytic domain of F(1) is coupled via a rotary mechanism of the central stalk subunits to proton translocation. In terms of biological role, key component of the F(0) channel; it plays a direct role in translocation across the membrane. A homomeric c-ring of between 10-14 subunits forms the central stalk rotor element with the F(1) delta and epsilon subunits. This is ATP synthase subunit c from Mycobacterium sp. (strain JLS).